The following is a 347-amino-acid chain: NADH-quinone oxidoreductase subunit H (347 aa).

Helical transmembrane passes span 25 to 45 (ILFMVVQSLVIFLVVVIVAAM), 95 to 115 (FMFTLAPAVAMFTALASFAII), 128 to 148 (IGILFFFAMAGIAVYAVLFGG), 168 to 188 (ISYEVFLGLSLMGVVALTGSF), 200 to 220 (GWYIIPQFFGFLTFVVAGVAV), 251 to 271 (FFIGEYVNVVLISALMTCLFF), 284 to 304 (FIPPAFWFMIKTLFFMTMFIL), and 324 to 344 (VCLPVTLINLLVTAAVILIFS).

Belongs to the complex I subunit 1 family. In terms of assembly, NDH-1 is composed of 14 different subunits. Subunits NuoA, H, J, K, L, M, N constitute the membrane sector of the complex.

It localises to the cell inner membrane. The catalysed reaction is a quinone + NADH + 5 H(+)(in) = a quinol + NAD(+) + 4 H(+)(out). In terms of biological role, NDH-1 shuttles electrons from NADH, via FMN and iron-sulfur (Fe-S) centers, to quinones in the respiratory chain. The immediate electron acceptor for the enzyme in this species is believed to be ubiquinone. Couples the redox reaction to proton translocation (for every two electrons transferred, four hydrogen ions are translocated across the cytoplasmic membrane), and thus conserves the redox energy in a proton gradient. This subunit may bind ubiquinone. The polypeptide is NADH-quinone oxidoreductase subunit H (Psychrobacter arcticus (strain DSM 17307 / VKM B-2377 / 273-4)).